Here is a 79-residue protein sequence, read N- to C-terminus: MNRTNQLILGAVVLGSTLLAGCSSNAKIDQLSSDVQTLSAKVEQLSNDVNAMRSDVQAAKDDAARANQRLDNKVFRICK.

Positions 1-21 are cleaved as a signal peptide; it reads MNRTNQLILGAVVLGSTLLAG. C22 carries the N-palmitoyl cysteine lipid modification. A lipid anchor (S-diacylglycerol cysteine) is attached at C22. 2 repeats span residues 25 to 35 and 39 to 49; these read NAKIDQLSSDV and SAKVEQLSNDV. Residues 28-69 are a coiled coil; that stretch reads IDQLSSDVQTLSAKVEQLSNDVNAMRSDVQAAKDDAARANQR. K79 is modified (N6-murein peptidoglycan lysine).

Belongs to the Lpp family. As to quaternary structure, homotrimer.

The protein resides in the cell outer membrane. The protein localises to the secreted. It is found in the cell wall. In terms of biological role, plays an important role in virulence. A highly abundant outer membrane lipoprotein that controls the distance between the inner and outer membranes. The only protein known to be covalently linked to the peptidoglycan network (PGN). Also non-covalently binds the PGN. The link between the cell outer membrane and PGN contributes to maintenance of the structural and functional integrity of the cell envelope, and maintains the correct distance between the PGN and the outer membrane. This Salmonella typhimurium (strain LT2 / SGSC1412 / ATCC 700720) protein is Major outer membrane lipoprotein Lpp 2.